The sequence spans 127 residues: MNLFTHLFLISCGASLGAMSRHGLTLLLNPLFTFLSFGTLIANYIGCLIMGIMLAMFWHSSAFSTEYRLFFVTGFLGSLTTFSAFSAEVIENLLQHKWLEGITITSLHILGCLFFTTLGVFIWRYFQ.

A run of 4 helical transmembrane segments spans residues 7–27 (LFLI…LTLL), 37–57 (FGTL…LAMF), 70–90 (FFVT…AEVI), and 102–122 (ITIT…GVFI). Positions 77 and 80 each coordinate Na(+).

It belongs to the fluoride channel Fluc/FEX (TC 1.A.43) family.

The protein localises to the cell inner membrane. The enzyme catalyses fluoride(in) = fluoride(out). Na(+) is not transported, but it plays an essential structural role and its presence is essential for fluoride channel function. Its function is as follows. Fluoride-specific ion channel. Important for reducing fluoride concentration in the cell, thus reducing its toxicity. This chain is Fluoride-specific ion channel FluC, found in Histophilus somni (strain 129Pt) (Haemophilus somnus).